The primary structure comprises 849 residues: uncharacterized protein (849 aa).

2 helical membrane passes run 587-607 (VALG…LGLF) and 620-640 (AGIL…TGDW).

It is found in the cell membrane. This is an uncharacterized protein from Methanocaldococcus jannaschii (strain ATCC 43067 / DSM 2661 / JAL-1 / JCM 10045 / NBRC 100440) (Methanococcus jannaschii).